The sequence spans 169 residues: Pyrophosphate-energized proton pump 1 (169 aa).

3 helical membrane-spanning segments follow: residues 45–65 (YVVA…GIAM), 114–134 (VIPS…VLLI), and 141–161 (AFAA…LVAI).

It belongs to the H(+)-translocating pyrophosphatase (TC 3.A.10) family. Homodimer. Requires Mg(2+) as cofactor.

It localises to the cell inner membrane. It catalyses the reaction diphosphate + H2O + H(+)(in) = 2 phosphate + 2 H(+)(out). Functionally, proton pump that utilizes the energy of pyrophosphate hydrolysis as the driving force for proton movement across the membrane. Generates a proton motive force. This is Pyrophosphate-energized proton pump 1 (hppA1) from Rhizobium leguminosarum bv. trifolii.